The primary structure comprises 350 residues: Probable flap endonuclease 1 homolog (350 aa).

Positions 1 to 95 are N-domain; it reads MGITKLAHLI…AVLEKRAQST (95 aa). Mg(2+) is bound at residue Asp-34. DNA is bound at residue Arg-61. Residues Asp-77, Glu-130, Glu-132, Asp-151, and Asp-153 each coordinate Mg(2+). The interval 110 to 223 is I-domain; that stretch reads NQECLRLLHL…SRALKLIKEH (114 aa). Glu-130 provides a ligand contact to DNA. The DNA site is built by Gly-201 and Asp-203. Asp-203 contributes to the Mg(2+) binding site. An interaction with PCNA region spans residues 317–325; that stretch reads RQSRLEDFF.

The protein belongs to the XPG/RAD2 endonuclease family. FEN1 subfamily. In terms of assembly, interacts with PCNA. Three molecules of fen1 bind to one PCNA trimer with each molecule binding to one PCNA monomer. PCNA stimulates the nuclease activity without altering cleavage specificity. It depends on Mg(2+) as a cofactor. Phosphorylated. Phosphorylation upon DNA damage induces relocalization to the nuclear plasma.

The protein resides in the nucleus. The protein localises to the nucleolus. It is found in the nucleoplasm. It localises to the mitochondrion. Functionally, structure-specific nuclease with 5'-flap endonuclease and 5'-3' exonuclease activities involved in DNA replication and repair. During DNA replication, cleaves the 5'-overhanging flap structure that is generated by displacement synthesis when DNA polymerase encounters the 5'-end of a downstream Okazaki fragment. It enters the flap from the 5'-end and then tracks to cleave the flap base, leaving a nick for ligation. Also involved in the long patch base excision repair (LP-BER) pathway, by cleaving within the apurinic/apyrimidinic (AP) site-terminated flap. Acts as a genome stabilization factor that prevents flaps from equilibrating into structures that lead to duplications and deletions. Also possesses 5'-3' exonuclease activity on nicked or gapped double-stranded DNA, and exhibits RNase H activity. Also involved in replication and repair of rDNA and in repairing mitochondrial DNA. The chain is Probable flap endonuclease 1 homolog from Danio rerio (Zebrafish).